A 237-amino-acid polypeptide reads, in one-letter code: uncharacterized protein (237 aa).

The next 7 membrane-spanning stretches (helical) occupy residues 19 to 39, 51 to 71, 81 to 101, 106 to 126, 136 to 156, 159 to 179, and 209 to 229; these read ILNG…GLAW, YDSP…YGLS, IAGV…ASLV, IIIV…AGLL, FIIM…AALM, RPIW…ISHG, and LYYY…TLVW.

The protein resides in the cell membrane. This is an uncharacterized protein from Escherichia coli (strain K12).